We begin with the raw amino-acid sequence, 147 residues long: Deoxyuridine 5'-triphosphate nucleotidohydrolase (147 aa).

Residues 63-65 (RSG), Asn76, and 80-82 (TID) each bind substrate.

Belongs to the dUTPase family. The cofactor is Mg(2+).

The catalysed reaction is dUTP + H2O = dUMP + diphosphate + H(+). It functions in the pathway pyrimidine metabolism; dUMP biosynthesis; dUMP from dCTP (dUTP route): step 2/2. Functionally, this enzyme is involved in nucleotide metabolism: it produces dUMP, the immediate precursor of thymidine nucleotides and it decreases the intracellular concentration of dUTP so that uracil cannot be incorporated into DNA. This is Deoxyuridine 5'-triphosphate nucleotidohydrolase from Chlamydia caviae (strain ATCC VR-813 / DSM 19441 / 03DC25 / GPIC) (Chlamydophila caviae).